Consider the following 360-residue polypeptide: BOLA class I histocompatibility antigen, alpha chain BL3-6 (360 aa).

An N-terminal signal peptide occupies residues 1-21 (MGPRALLLLLSGVLILTETRA). The interval 22 to 111 (GSHSLRYFST…LRGYYNQSEA (90 aa)) is alpha-1. Residues 22 to 308 (GSHSLRYFST…QPSFLTMGII (287 aa)) lie on the Extracellular side of the membrane. N-linked (GlcNAc...) asparagine glycosylation occurs at asparagine 107. The tract at residues 112 to 203 (GSHTLQWMSG…ENGKDTLLRA (92 aa)) is alpha-2. 2 disulfides stabilise this stretch: cysteine 122–cysteine 185 and cysteine 224–cysteine 280. The alpha-3 stretch occupies residues 204-295 (DPPKAHVTHH…GLQEPLTLRW (92 aa)). The Ig-like C1-type domain maps to 206-292 (PKAHVTHHPI…QHEGLQEPLT (87 aa)). Residues 296–308 (EPPQPSFLTMGII) form a connecting peptide region. The helical transmembrane segment at 309-328 (VGLVLLVVTGAVVAGVVICM) threads the bilayer. Topologically, residues 329 to 360 (KKRSGEKGGNYIQASSSDSAQGSDVSLTVPKV) are cytoplasmic. The interval 340 to 360 (IQASSSDSAQGSDVSLTVPKV) is disordered. A compositionally biased stretch (low complexity) spans 341–354 (QASSSDSAQGSDVS). Phosphoserine occurs at positions 351 and 354.

This sequence belongs to the MHC class I family. Heterodimer of an alpha chain and a beta chain (beta-2-microglobulin).

The protein resides in the membrane. In terms of biological role, involved in the presentation of foreign antigens to the immune system. This chain is BOLA class I histocompatibility antigen, alpha chain BL3-6, found in Bos taurus (Bovine).